The following is a 392-amino-acid chain: MNIHEYQGKEILRGFGVTVPKGIVAFSAEEAKKAAETLLTEQGGGVVVVKAQIHAGGRGKAGGVKLVRSADEAFEVATQMIGTTLVTHQTGPEGKEVRRLLVEEGMNIEKELYLGITLDRATSCNVLMVSTEGGMEIEKVAEETPEKLLKIQIHPTLGLQPNQAREAAFFLGLEGEQFKNAVKFISALYNAYMKADCSLAEINPLVVTKEGRVIALDAKINFDDNALFRHKDYIDLRDTSEEDPLEVEASKSNLNYVRLDGNVGCMVNGAGLAMGTMDMIQLAGGKPANFLDVGGGANPQTVQEGFRIILTDPNVKAILVNIFGGIVRCDRVAGGVIEAAKNIDIHVPVIVRLEGTNADIAQKMLDESGLNLVSAKGLSDAAKKVNEALAAA.

The ATP-grasp domain maps to 9 to 248 (KEILRGFGVT…TSEEDPLEVE (240 aa)). ATP-binding positions include K50, 57-59 (GRG), E103, M106, and E111. Mg(2+) contacts are provided by N203 and D217. Substrate is bound by residues N268 and 325–327 (GIV).

Belongs to the succinate/malate CoA ligase beta subunit family. Heterotetramer of two alpha and two beta subunits. Mg(2+) serves as cofactor.

It catalyses the reaction succinate + ATP + CoA = succinyl-CoA + ADP + phosphate. The catalysed reaction is GTP + succinate + CoA = succinyl-CoA + GDP + phosphate. Its pathway is carbohydrate metabolism; tricarboxylic acid cycle; succinate from succinyl-CoA (ligase route): step 1/1. Functionally, succinyl-CoA synthetase functions in the citric acid cycle (TCA), coupling the hydrolysis of succinyl-CoA to the synthesis of either ATP or GTP and thus represents the only step of substrate-level phosphorylation in the TCA. The beta subunit provides nucleotide specificity of the enzyme and binds the substrate succinate, while the binding sites for coenzyme A and phosphate are found in the alpha subunit. The polypeptide is Succinate--CoA ligase [ADP-forming] subunit beta (Chloroherpeton thalassium (strain ATCC 35110 / GB-78)).